The chain runs to 128 residues: MKRSSQDSGSRSIPEDRKLYVVDSINDLNKLNLCPAGSQQLFPLEEKLQDISTDSGNGSRSLFLVGLIIVLIISLALVSFVIFLIVQTENKMEDVSRRLAAEGKDIDDLKKINSIIVKRLNQLDSEQS.

Ser24 is subject to Phosphoserine. A helical membrane pass occupies residues 65–85 (VGLIIVLIISLALVSFVIFLI). Residues 87–111 (QTENKMEDVSRRLAAEGKDIDDLKK) adopt a coiled-coil conformation.

It is found in the membrane. This Bos taurus (Bovine) protein is Leucine-rich single-pass membrane protein 1 (LSMEM1).